Reading from the N-terminus, the 824-residue chain is Glycerol-3-phosphate acyltransferase (824 aa).

Positions 302–307 (CHRSHM) match the HXXXXD motif motif.

Belongs to the GPAT/DAPAT family.

Its subcellular location is the cell inner membrane. The enzyme catalyses sn-glycerol 3-phosphate + an acyl-CoA = a 1-acyl-sn-glycero-3-phosphate + CoA. It participates in phospholipid metabolism; CDP-diacylglycerol biosynthesis; CDP-diacylglycerol from sn-glycerol 3-phosphate: step 1/3. In Actinobacillus pleuropneumoniae serotype 7 (strain AP76), this protein is Glycerol-3-phosphate acyltransferase.